Here is a 281-residue protein sequence, read N- to C-terminus: MADAASQPIYWSELGLSPGIDLGFFTLRFYSLAYIVGIVLAYWHLGKMIKAPGAPMAQSHADDLFFYCTLGVIFGGRIGYVLFYRPDLLGTLDMFKVWEGGMSFHGGVIGVVLAILFVSWRGKLNWLRVCDYIAVNVPFGMFLGRMANFVNGELYGRPTDVSWAMIFPTDPDQVARHPSQLYQAGLEGLLMMAVMLLLFWQTRARWRPGVLVGVFTIGIAGARFVNEFFRAPDAHLADVVRDTGLSQGQWLSIPMILVGLAVVVYALTRKTKGTPEKPASA.

4 helical membrane passes run 29–49 (FYSL…GKMI), 64–84 (LFFY…VLFY), 100–120 (GGMS…FVSW), and 124–144 (LNWL…MFLG). An a 1,2-diacyl-sn-glycero-3-phospho-(1'-sn-glycerol)-binding site is contributed by Arg145. 3 consecutive transmembrane segments (helical) span residues 180 to 200 (QLYQ…LLFW), 209 to 229 (GVLV…NEFF), and 248 to 268 (GQWL…YALT).

This sequence belongs to the Lgt family.

The protein localises to the cell inner membrane. The catalysed reaction is L-cysteinyl-[prolipoprotein] + a 1,2-diacyl-sn-glycero-3-phospho-(1'-sn-glycerol) = an S-1,2-diacyl-sn-glyceryl-L-cysteinyl-[prolipoprotein] + sn-glycerol 1-phosphate + H(+). It functions in the pathway protein modification; lipoprotein biosynthesis (diacylglyceryl transfer). Its function is as follows. Catalyzes the transfer of the diacylglyceryl group from phosphatidylglycerol to the sulfhydryl group of the N-terminal cysteine of a prolipoprotein, the first step in the formation of mature lipoproteins. This Erythrobacter litoralis (strain HTCC2594) protein is Phosphatidylglycerol--prolipoprotein diacylglyceryl transferase.